A 568-amino-acid chain; its full sequence is MSSLYTKLVKGATKIKMAPPKQKYVDPILSGTSSARGLQEITHALDIRLSDTAWTIVYKALIVLHLMIQQGEKDVTLRHYSHNLDVFQLRKISHTTKWSSNDMRALQRYDEYLKTRCEEYGRLGMDHLRDNYSSLKLGSKNQLSMDEELDHVESLEIQINALIRNKYSVSDLENHLLLYAFQLLVQDLLGLYNALNEGVITLLESFFELSIEHAKRTLDLYKDFVDMTEYVVRYLKIGKAVGLKIPVIKHITTKLINSLEEHLREETKRQRGEPSEPQQDRKPSTAISSTSSHNNNSNDKNKSIAQKKLEQIREQKRLLEQQLQNQQLLISPTVPQDAYNPFGSQQQDLNNDTFSFEPTQPQMTAQVPQPTANPFLIPQQQQQALQLTSASTMPQPSEIQITPNLNNQQTGMYASNLQYTPNFTGSGFGGYTTTENNAIMTGTLDPTKTGSNNPFSLENIAREQQQQNFQNSPNPFTLQQAQTTPILAHSQTGNPFQAQNVVTSPMGTYMTNPVAGQLQYASTGAQQQPQMMQGQQTGYVMVPTAFVPINQQQQQQQHQQENPNLIDI.

The ENTH domain occupies 1–127 (MSSLYTKLVK…EEYGRLGMDH (127 aa)). Residues 262–283 (HLREETKRQRGEPSEPQQDRKP) show a composition bias toward basic and acidic residues. The tract at residues 262 to 302 (HLREETKRQRGEPSEPQQDRKPSTAISSTSSHNNNSNDKNK) is disordered. Residue lysine 282 forms a Glycyl lysine isopeptide (Lys-Gly) (interchain with G-Cter in ubiquitin) linkage. Residues 284 to 298 (STAISSTSSHNNNSN) show a composition bias toward low complexity. Threonine 449 bears the Phosphothreonine mark.

It belongs to the AP180 family. In terms of assembly, interacts with PAN1 and the clathrin heavy and light chains CHC1 and CLC1.

It localises to the bud. The protein localises to the bud neck. It is found in the cell membrane. Its subcellular location is the cytoplasm. Involved in endocytosis and clathrin cage assembly. This is Clathrin coat assembly protein AP180B (YAP1802) from Saccharomyces cerevisiae (strain ATCC 204508 / S288c) (Baker's yeast).